The following is a 166-amino-acid chain: Holin-like protein TcdE (166 aa).

The next 4 helical transmembrane spans lie at 15–35 (IFFYINLGGVMNMTISFLSEH), 36–56 (IFIKLVILTISFDTLLGCLSA), 77–97 (MIACIFFLSVVDILTKFNFLF), and 111–131 (HLGISEFFSILFILYESVSIL).

The protein belongs to the bacteriophage holin family. Homomultimer.

It localises to the cell membrane. Holin-like protein required for secretion of toxins A and B (TcdA and TcdB). Facilitates the release of toxins to the extracellular environment without causing the bacterial cell lysis. Functionally, has weak activity, suggesting that it may act as a antiholin when multiple forms are produced. The protein is Holin-like protein TcdE of Clostridioides difficile (Peptoclostridium difficile).